A 147-amino-acid polypeptide reads, in one-letter code: Large ribosomal subunit protein uL16 (147 aa).

It belongs to the universal ribosomal protein uL16 family. Part of the 50S ribosomal subunit.

Its function is as follows. Binds 23S rRNA and is also seen to make contacts with the A and possibly P site tRNAs. This is Large ribosomal subunit protein uL16 from Clostridium novyi (strain NT).